We begin with the raw amino-acid sequence, 310 residues long: MLPVVVVHGGAGHIPKERTEESTIGVKEAARTGYAILQRGGSAVDAVVEAVALMETNPRFNAGRGSVLNIKGEVEMDALVMDGRTLDSGAVSAVRRIANPVQLARLVMEKTKHLCLTAEGASKFARSMGVPEVPEESLITDYAKMRWKKNLEPDANPVECQMGKMGTVGAVAVDMDGNIACATSTGGMINKMEGRVGDTPCVGCGGYADNKIGAVSPTGHGEAIMKVTLSRLVLFHMEQGKTPEEASDLALAYMKERVDGLGGVVVVDHNGTWAARFSSLQMSWAAAQQGKLHFGLFHGDHFTEPVEEHT.

The active-site Nucleophile is the Thr-167. Substrate contacts are provided by residues 195–198 (RVGD) and 218–221 (TGHG).

It belongs to the Ntn-hydrolase family. As to quaternary structure, heterodimer of an alpha and beta chain produced by autocleavage. Post-translationally, cleaved into an alpha and beta chain by autocatalysis; this activates the enzyme. The N-terminal residue of the beta subunit is responsible for the nucleophile hydrolase activity.

The protein localises to the cytoplasm. It catalyses the reaction L-asparagine + H2O = L-aspartate + NH4(+). It carries out the reaction Cleavage of a beta-linked Asp residue from the N-terminus of a polypeptide.. Its function is as follows. Has both L-asparaginase and beta-aspartyl peptidase activity. Does not have aspartylglucosaminidase activity and is inactive toward GlcNAc-L-Asn. Likewise, has no activity toward glutamine. The protein is Isoaspartyl peptidase/L-asparaginase (asrgl1) of Danio rerio (Zebrafish).